A 148-amino-acid chain; its full sequence is Lysozyme C (148 aa).

A signal peptide spans 1 to 18; that stretch reads MKALIVLGLVLLSVMVQG. A C-type lysozyme domain is found at 19–148; that stretch reads KVFERCELAR…VRQYVQGCGV (130 aa). 4 disulfides stabilise this stretch: C24–C146, C48–C134, C83–C99, and C95–C113. Catalysis depends on residues E53 and D71.

This sequence belongs to the glycosyl hydrolase 22 family. Monomer.

The enzyme catalyses Hydrolysis of (1-&gt;4)-beta-linkages between N-acetylmuramic acid and N-acetyl-D-glucosamine residues in a peptidoglycan and between N-acetyl-D-glucosamine residues in chitodextrins.. Functionally, lysozymes have primarily a bacteriolytic function; those in tissues and body fluids are associated with the monocyte-macrophage system and enhance the activity of immunoagents. This chain is Lysozyme C (LYZ), found in Gorilla gorilla gorilla (Western lowland gorilla).